A 345-amino-acid polypeptide reads, in one-letter code: Pectin lyase (345 aa).

The signal sequence occupies residues 1-24 (MKRFCLWFAVFSLLLVLLPGKAFG). Arginine 234 is a catalytic residue.

The protein belongs to the polysaccharide lyase 1 family.

Its subcellular location is the secreted. It catalyses the reaction Eliminative cleavage of (1-&gt;4)-alpha-D-galacturonan methyl ester to give oligosaccharides with 4-deoxy-6-O-methyl-alpha-D-galact-4-enuronosyl groups at their non-reducing ends.. Its activity is regulated as follows. Inhibited by Hg(2+) and Mn(2+). Not affected by EDTA in vitro. In terms of biological role, catalyzes the depolymerization of pectins of methyl esterification degree from 13 to 75%, with an endo mode of action. Cannot degrade polygalacturonate. Also displays protopectinase activity, i.e. releases pectin from protopectin. In Bacillus subtilis, this protein is Pectin lyase (pelB).